The following is a 379-amino-acid chain: Deoxyhypusine synthase (379 aa).

NAD(+)-binding positions include 104-108, 130-132, E136, and D237; these read SNLVS and TAG. Residue 135 to 136 coordinates spermidine; that stretch reads EE. D242 lines the spermidine pocket. An NAD(+)-binding site is contributed by G293. A spermidine-binding site is contributed by H298. Residue 318-319 coordinates NAD(+); sequence TA. Spermidine is bound by residues 324–326 and 333–339; these read GSD and EAVSWGK. Catalysis depends on K339, which acts as the Nucleophile. Residue 352-353 coordinates NAD(+); that stretch reads DA.

It belongs to the deoxyhypusine synthase family. In terms of assembly, homotetramer. The cofactor is NAD(+).

It catalyses the reaction [eIF5A protein]-L-lysine + spermidine = [eIF5A protein]-deoxyhypusine + propane-1,3-diamine. Its pathway is protein modification; eIF5A hypusination. Functionally, catalyzes the NAD-dependent oxidative cleavage of spermidine and the subsequent transfer of the butylamine moiety of spermidine to the epsilon-amino group of a specific lysine residue of the eIF-5A precursor protein to form the intermediate deoxyhypusine residue. Also able to produce homospermidine from putrescine. The chain is Deoxyhypusine synthase (DHS1) from Nicotiana tabacum (Common tobacco).